The primary structure comprises 344 residues: Succinylglutamate desuccinylase (344 aa).

His-63, Glu-66, and His-160 together coordinate Zn(2+). The active site involves Glu-224.

It belongs to the AspA/AstE family. Succinylglutamate desuccinylase subfamily. The cofactor is Zn(2+).

It carries out the reaction N-succinyl-L-glutamate + H2O = L-glutamate + succinate. It functions in the pathway amino-acid degradation; L-arginine degradation via AST pathway; L-glutamate and succinate from L-arginine: step 5/5. Its function is as follows. Transforms N(2)-succinylglutamate into succinate and glutamate. This chain is Succinylglutamate desuccinylase, found in Shewanella baltica (strain OS223).